A 186-amino-acid polypeptide reads, in one-letter code: MSEPASISAGIADRYATAIFEIAAESNALDNLETSINDLAASLADSEDLRTLITSPLVSREEQAAAISAVADKMGLVDVLRNSLALMAAKRRLFVVPALIDALRARIAEARGEVTAEVVSAKALTKTQSEKLAKTLAERVGKKVTINATVDASIIGGLVVKVGSKMIDSSIRSKLNSLQNAMKEVG.

It belongs to the ATPase delta chain family. F-type ATPases have 2 components, F(1) - the catalytic core - and F(0) - the membrane proton channel. F(1) has five subunits: alpha(3), beta(3), gamma(1), delta(1), epsilon(1). F(0) has three main subunits: a(1), b(2) and c(10-14). The alpha and beta chains form an alternating ring which encloses part of the gamma chain. F(1) is attached to F(0) by a central stalk formed by the gamma and epsilon chains, while a peripheral stalk is formed by the delta and b chains.

The protein localises to the cell inner membrane. Functionally, f(1)F(0) ATP synthase produces ATP from ADP in the presence of a proton or sodium gradient. F-type ATPases consist of two structural domains, F(1) containing the extramembraneous catalytic core and F(0) containing the membrane proton channel, linked together by a central stalk and a peripheral stalk. During catalysis, ATP synthesis in the catalytic domain of F(1) is coupled via a rotary mechanism of the central stalk subunits to proton translocation. This protein is part of the stalk that links CF(0) to CF(1). It either transmits conformational changes from CF(0) to CF(1) or is implicated in proton conduction. This is ATP synthase subunit delta from Ruegeria sp. (strain TM1040) (Silicibacter sp.).